Reading from the N-terminus, the 165-residue chain is 2-C-methyl-D-erythritol 2,4-cyclodiphosphate synthase (165 aa).

Residues D9 and H11 each contribute to the a divalent metal cation site. Residues 9-11 and 35-36 contribute to the 4-CDP-2-C-methyl-D-erythritol 2-phosphate site; these read DVH and HS. A divalent metal cation is bound at residue H43. Residues 57–59, 101–107, 133–136, F140, and R143 each bind 4-CDP-2-C-methyl-D-erythritol 2-phosphate; these read DIG, AQAPKML, and TTTE.

Belongs to the IspF family. As to quaternary structure, homotrimer. The cofactor is a divalent metal cation.

The enzyme catalyses 4-CDP-2-C-methyl-D-erythritol 2-phosphate = 2-C-methyl-D-erythritol 2,4-cyclic diphosphate + CMP. It participates in isoprenoid biosynthesis; isopentenyl diphosphate biosynthesis via DXP pathway; isopentenyl diphosphate from 1-deoxy-D-xylulose 5-phosphate: step 4/6. In terms of biological role, involved in the biosynthesis of isopentenyl diphosphate (IPP) and dimethylallyl diphosphate (DMAPP), two major building blocks of isoprenoid compounds. Catalyzes the conversion of 4-diphosphocytidyl-2-C-methyl-D-erythritol 2-phosphate (CDP-ME2P) to 2-C-methyl-D-erythritol 2,4-cyclodiphosphate (ME-CPP) with a corresponding release of cytidine 5-monophosphate (CMP). This is 2-C-methyl-D-erythritol 2,4-cyclodiphosphate synthase from Pseudoalteromonas translucida (strain TAC 125).